The primary structure comprises 236 residues: Small ribosomal subunit protein uS2c (236 aa).

Belongs to the universal ribosomal protein uS2 family.

It localises to the plastid. The polypeptide is Small ribosomal subunit protein uS2c (rps2) (Cuscuta gronovii (Common dodder)).